Here is a 314-residue protein sequence, read N- to C-terminus: DNA-directed RNA polymerase subunit alpha (314 aa).

Positions 1–228 (MIEIEKPKIE…EHLNIFVGLT (228 aa)) are alpha N-terminal domain (alpha-NTD). The segment at 245 to 314 (KEKVLEMTIE…ELGLSLRKDD (70 aa)) is alpha C-terminal domain (alpha-CTD).

Belongs to the RNA polymerase alpha chain family. Homodimer. The RNAP catalytic core consists of 2 alpha, 1 beta, 1 beta' and 1 omega subunit. When a sigma factor is associated with the core the holoenzyme is formed, which can initiate transcription.

It carries out the reaction RNA(n) + a ribonucleoside 5'-triphosphate = RNA(n+1) + diphosphate. Its function is as follows. DNA-dependent RNA polymerase catalyzes the transcription of DNA into RNA using the four ribonucleoside triphosphates as substrates. The polypeptide is DNA-directed RNA polymerase subunit alpha (Geobacillus thermodenitrificans (strain NG80-2)).